The sequence spans 198 residues: Carnitine operon protein CaiE (198 aa).

Residues 174 to 198 are disordered; sequence KPLTQAEENRPRLKGTTDVKPKSAQ. The span at 180–198 shows a compositional bias: basic and acidic residues; the sequence is EENRPRLKGTTDVKPKSAQ.

It belongs to the transferase hexapeptide repeat family.

It functions in the pathway amine and polyamine metabolism; carnitine metabolism. In terms of biological role, overproduction of CaiE stimulates the activity of CaiB and CaiD. The polypeptide is Carnitine operon protein CaiE (Salmonella dublin (strain CT_02021853)).